The primary structure comprises 705 residues: Elongation factor G (705 aa).

In terms of domain architecture, tr-type G spans His-8–Ala-290. GTP contacts are provided by residues Ala-17 to Thr-24, Asp-88 to His-92, and Asn-142 to Asp-145.

The protein belongs to the TRAFAC class translation factor GTPase superfamily. Classic translation factor GTPase family. EF-G/EF-2 subfamily.

Its subcellular location is the cytoplasm. Its function is as follows. Catalyzes the GTP-dependent ribosomal translocation step during translation elongation. During this step, the ribosome changes from the pre-translocational (PRE) to the post-translocational (POST) state as the newly formed A-site-bound peptidyl-tRNA and P-site-bound deacylated tRNA move to the P and E sites, respectively. Catalyzes the coordinated movement of the two tRNA molecules, the mRNA and conformational changes in the ribosome. The sequence is that of Elongation factor G from Xylella fastidiosa (strain M23).